Here is a 370-residue protein sequence, read N- to C-terminus: Tyrosyl-DNA phosphodiesterase 2 (370 aa).

Met1 is subject to N-acetylmethionine. Positions 1–32 (MASGSSSDAAEPAGPAGRAASAPEAAQAEEDR) are disordered. Positions 9-26 (AAEPAGPAGRAASAPEAA) are enriched in low complexity. Lys34 is covalently cross-linked (Glycyl lysine isopeptide (Lys-Gly) (interchain with G-Cter in SUMO2)). Position 99 is a phosphothreonine; by ACVR1B (Thr99). Residues 130–134 (NIDGL) are interaction with 5' end of substrate DNA. Mg(2+) is bound by residues Asp132 and Glu162. Positions 236–241 (HLESTR) are interaction with 5' end of substrate DNA. Asp272 acts as the Proton donor/acceptor in catalysis. Interaction with 5' end of substrate DNA regions lie at residues 274-276 (NLR) and 315-321 (LRIPAAY).

It belongs to the CCR4/nocturin family. In terms of assembly, interacts with TRAF2, TRAF3, TRAF5, TRAF6, TNFRSF8/CD30, TNFRSF5/CD40, TNFRSF1B/TNF-R75, ETS1, ETS2, FLI1, SMAD3 and ACVR1B/ALK4. The cofactor is Mg(2+). Mn(2+) is required as a cofactor. Post-translationally, ubiquitinated by TRAF6. Widely expressed. Expressed in whole brain, cerebellum, quiescent cortical astrocytes and cerebellar granule neurons.

It localises to the nucleus. The protein localises to the PML body. It is found in the nucleolus. The protein resides in the cytoplasm. In terms of biological role, DNA repair enzyme that can remove a variety of covalent adducts from DNA through hydrolysis of a 5'-phosphodiester bond, giving rise to DNA with a free 5' phosphate. Catalyzes the hydrolysis of dead-end complexes between DNA and the topoisomerase 2 (TOP2) active site tyrosine residue. The 5'-tyrosyl DNA phosphodiesterase activity can enable the repair of TOP2-induced DNA double-strand breaks/DSBs without the need for nuclease activity, creating a 'clean' DSB with 5'-phosphate termini that are ready for ligation. Thereby, protects the transcription of many genes involved in neurological development and maintenance from the abortive activity of TOP2. Hydrolyzes 5'-phosphoglycolates on protruding 5' ends on DSBs due to DNA damage by radiation and free radicals. Has preference for single-stranded DNA or duplex DNA with a 4 base pair overhang as substrate. Also has 3'-tyrosyl DNA phosphodiesterase activity, but less efficiently and much slower than TDP1. Constitutes the major if not only 5'-tyrosyl-DNA phosphodiesterase in cells. Also acts as an adapter by participating in the specific activation of MAP3K7/TAK1 in response to TGF-beta: associates with components of the TGF-beta receptor-TRAF6-TAK1 signaling module and promotes their ubiquitination dependent complex formation. Involved in non-canonical TGF-beta induced signaling routes. May also act as a negative regulator of ETS1 and may inhibit NF-kappa-B activation. Acts as a regulator of ribosome biogenesis following stress. The chain is Tyrosyl-DNA phosphodiesterase 2 (Tdp2) from Mus musculus (Mouse).